A 374-amino-acid polypeptide reads, in one-letter code: Lipoyl synthase, mitochondrial (374 aa).

[4Fe-4S] cluster-binding residues include Cys-101, Cys-106, Cys-112, Cys-132, Cys-136, Cys-139, and Ser-347. Residues 117-336 (ENGTQTATIM…EERGNDLGFL (220 aa)) form the Radical SAM core domain.

This sequence belongs to the radical SAM superfamily. Lipoyl synthase family. [4Fe-4S] cluster serves as cofactor.

It is found in the mitochondrion. The enzyme catalyses [[Fe-S] cluster scaffold protein carrying a second [4Fe-4S](2+) cluster] + N(6)-octanoyl-L-lysyl-[protein] + 2 oxidized [2Fe-2S]-[ferredoxin] + 2 S-adenosyl-L-methionine + 4 H(+) = [[Fe-S] cluster scaffold protein] + N(6)-[(R)-dihydrolipoyl]-L-lysyl-[protein] + 4 Fe(3+) + 2 hydrogen sulfide + 2 5'-deoxyadenosine + 2 L-methionine + 2 reduced [2Fe-2S]-[ferredoxin]. Its pathway is protein modification; protein lipoylation via endogenous pathway; protein N(6)-(lipoyl)lysine from octanoyl-[acyl-carrier-protein]: step 2/2. Catalyzes the radical-mediated insertion of two sulfur atoms into the C-6 and C-8 positions of the octanoyl moiety bound to the lipoyl domains of lipoate-dependent enzymes, thereby converting the octanoylated domains into lipoylated derivatives. This is Lipoyl synthase, mitochondrial from Drosophila pseudoobscura pseudoobscura (Fruit fly).